A 193-amino-acid polypeptide reads, in one-letter code: Holliday junction branch migration complex subunit RuvA (193 aa).

The tract at residues 1-64 is domain I; that stretch reads MIGRIAGTLI…EDAHLLYGFG (64 aa). A domain II region spans residues 65 to 143; that stretch reads SAAERNTFRE…AELGHAPGAA (79 aa). Residues 144–151 are flexible linker; the sequence is PVHDSAVD. Positions 151 to 193 are domain III; sequence DILNALLALGYSEKEAATAIKQVPAGTGVSDGIKLALKALSKA.

Belongs to the RuvA family. As to quaternary structure, homotetramer. Forms an RuvA(8)-RuvB(12)-Holliday junction (HJ) complex. HJ DNA is sandwiched between 2 RuvA tetramers; dsDNA enters through RuvA and exits via RuvB. An RuvB hexamer assembles on each DNA strand where it exits the tetramer. Each RuvB hexamer is contacted by two RuvA subunits (via domain III) on 2 adjacent RuvB subunits; this complex drives branch migration. In the full resolvosome a probable DNA-RuvA(4)-RuvB(12)-RuvC(2) complex forms which resolves the HJ.

It localises to the cytoplasm. In terms of biological role, the RuvA-RuvB-RuvC complex processes Holliday junction (HJ) DNA during genetic recombination and DNA repair, while the RuvA-RuvB complex plays an important role in the rescue of blocked DNA replication forks via replication fork reversal (RFR). RuvA specifically binds to HJ cruciform DNA, conferring on it an open structure. The RuvB hexamer acts as an ATP-dependent pump, pulling dsDNA into and through the RuvAB complex. HJ branch migration allows RuvC to scan DNA until it finds its consensus sequence, where it cleaves and resolves the cruciform DNA. In Cupriavidus pinatubonensis (strain JMP 134 / LMG 1197) (Cupriavidus necator (strain JMP 134)), this protein is Holliday junction branch migration complex subunit RuvA.